The chain runs to 183 residues: Interleukin-36 beta (183 aa).

Positions 1–30 (MMAFPPQSCVHVLPPKSIQMWEPNHNTMHG) are excised as a propeptide.

Belongs to the IL-1 family. As to quaternary structure, interacts with cargo receptor TMED10; the interaction mediates the translocation from the cytoplasm into the ERGIC (endoplasmic reticulum-Golgi intermediate compartment) and thereby secretion. N-terminal truncation leads to a dramatic enhancement of its activity (&gt;1000-fold).

It is found in the cytoplasm. It localises to the secreted. In terms of biological role, cytokine that binds to and signals through the IL1RL2/IL-36R receptor which in turn activates NF-kappa-B and MAPK signaling pathways in target cells linked to a pro-inflammatory response. Part of the IL-36 signaling system that is thought to be present in epithelial barriers and to take part in local inflammatory response; similar to the IL-1 system with which it shares the coreceptor IL1RAP. Stimulates production of interleukin-6 and interleukin-8 in synovial fibrobasts, articular chondrocytes and mature adipocytes. Induces expression of a number of antimicrobial peptides including beta-defensin 4 and beta-defensin 103 as well as a number of matrix metalloproteases. Seems to be involved in skin inflammatory response by acting on keratinocytes, dendritic cells and indirectly on T-cells to drive tissue infiltration, cell maturation and cell proliferation. Induces the production of pro-inflammatory cytokines in bone marrow-derived dendritic cells (BMDCs), including IL-12, Il-1 beta, IL-6, TNF-alpha and IL-23, and activates p38 MAPK phosphorylation in BMDCs. Involved in dendritic cell maturation by stimulating the surface expression of CD80, CD86 and MHC class II. Induces the production of IFN-gamma, IL-4 and IL-17 by T-helper 1 (Th1) cells, cultured CD4(+) T-cells and splenocytes. In Mus musculus (Mouse), this protein is Interleukin-36 beta.